Reading from the N-terminus, the 489-residue chain is Rhamnulokinase (489 aa).

13 to 17 lines the ATP pocket; sequence ASSGR. A disulfide bridge links Cys68 with Cys222. Substrate-binding positions include Gly83 and 236 to 238; that span reads HDT. Residue Asp237 is the Proton acceptor of the active site. Thr259 is a binding site for ATP. Asn296 contacts substrate. Residue Gln304 coordinates ATP. Residues Cys353 and Cys370 are joined by a disulfide bond. Gly402 provides a ligand contact to ATP. An intrachain disulfide couples Cys413 to Cys417.

Belongs to the rhamnulokinase family. The cofactor is Mg(2+).

It carries out the reaction L-rhamnulose + ATP = L-rhamnulose 1-phosphate + ADP + H(+). Its pathway is carbohydrate degradation; L-rhamnose degradation; glycerone phosphate from L-rhamnose: step 2/3. Its function is as follows. Involved in the catabolism of L-rhamnose (6-deoxy-L-mannose). Catalyzes the transfer of the gamma-phosphate group from ATP to the 1-hydroxyl group of L-rhamnulose to yield L-rhamnulose 1-phosphate. The chain is Rhamnulokinase from Salmonella typhimurium (strain LT2 / SGSC1412 / ATCC 700720).